The chain runs to 328 residues: DNA-directed RNA polymerase subunit alpha (328 aa).

Positions 1–234 (MVREKVKVST…DLFIPFLQAE (234 aa)) are alpha N-terminal domain (alpha-NTD). The tract at residues 268–328 (IALKSIFIDQ…KQIMSILEKK (61 aa)) is alpha C-terminal domain (alpha-CTD).

The protein belongs to the RNA polymerase alpha chain family. As to quaternary structure, in plastids the minimal PEP RNA polymerase catalytic core is composed of four subunits: alpha, beta, beta', and beta''. When a (nuclear-encoded) sigma factor is associated with the core the holoenzyme is formed, which can initiate transcription.

The protein localises to the plastid. The protein resides in the chloroplast. The catalysed reaction is RNA(n) + a ribonucleoside 5'-triphosphate = RNA(n+1) + diphosphate. Functionally, DNA-dependent RNA polymerase catalyzes the transcription of DNA into RNA using the four ribonucleoside triphosphates as substrates. This chain is DNA-directed RNA polymerase subunit alpha, found in Citrus sinensis (Sweet orange).